The following is a 309-amino-acid chain: Homoserine O-succinyltransferase (309 aa).

Cysteine 142 (acyl-thioester intermediate) is an active-site residue. Lysine 163 and serine 192 together coordinate substrate. Histidine 235 acts as the Proton acceptor in catalysis. The active site involves glutamate 237. Substrate is bound at residue arginine 249.

This sequence belongs to the MetA family.

It is found in the cytoplasm. The enzyme catalyses L-homoserine + succinyl-CoA = O-succinyl-L-homoserine + CoA. It participates in amino-acid biosynthesis; L-methionine biosynthesis via de novo pathway; O-succinyl-L-homoserine from L-homoserine: step 1/1. Transfers a succinyl group from succinyl-CoA to L-homoserine, forming succinyl-L-homoserine. The sequence is that of Homoserine O-succinyltransferase from Klebsiella pneumoniae (strain 342).